Reading from the N-terminus, the 648-residue chain is 1-deoxy-D-xylulose-5-phosphate synthase (648 aa).

Thiamine diphosphate contacts are provided by residues histidine 74 and 115–117 (GHA). Aspartate 146 provides a ligand contact to Mg(2+). Residues 147–148 (GA), asparagine 176, tyrosine 292, and glutamate 375 each bind thiamine diphosphate. Asparagine 176 is a Mg(2+) binding site.

It belongs to the transketolase family. DXPS subfamily. In terms of assembly, homodimer. It depends on Mg(2+) as a cofactor. Thiamine diphosphate serves as cofactor.

It carries out the reaction D-glyceraldehyde 3-phosphate + pyruvate + H(+) = 1-deoxy-D-xylulose 5-phosphate + CO2. The protein operates within metabolic intermediate biosynthesis; 1-deoxy-D-xylulose 5-phosphate biosynthesis; 1-deoxy-D-xylulose 5-phosphate from D-glyceraldehyde 3-phosphate and pyruvate: step 1/1. Functionally, catalyzes the acyloin condensation reaction between C atoms 2 and 3 of pyruvate and glyceraldehyde 3-phosphate to yield 1-deoxy-D-xylulose-5-phosphate (DXP). This Synechococcus sp. (strain JA-2-3B'a(2-13)) (Cyanobacteria bacterium Yellowstone B-Prime) protein is 1-deoxy-D-xylulose-5-phosphate synthase.